Here is a 108-residue protein sequence, read N- to C-terminus: Cytochrome bo(3) ubiquinol oxidase subunit 4 (108 aa).

Residues 1-16 (MNKYKKIKNNFDKEKK) are Cytoplasmic-facing. A helical membrane pass occupies residues 17–37 (SYIVGFLFSLFLTIIPFFCTL). Residues 38 to 46 (NHLFSRKIN) are Extracellular-facing. A helical membrane pass occupies residues 47–67 (FFVILLCALSQIIIHFIYFLH). Over 68–77 (LDFSKKNSWN) the chain is Cytoplasmic. A helical membrane pass occupies residues 78–98 (IISLLFILIIVFIIVFGSIWI). Residues 99-108 (MYNLNHHVIL) are Extracellular-facing.

The protein belongs to the cytochrome c oxidase bacterial subunit 4 family. In terms of assembly, heterooctamer of two A chains, two B chains, two C chains and two D chains.

Its subcellular location is the cell membrane. Functionally, cytochrome bo(3) ubiquinol terminal oxidase is the component of the aerobic respiratory chain of E.coli that predominates when cells are grown at high aeration. Has proton pump activity across the membrane in addition to electron transfer, pumping 2 protons/electron. This Buchnera aphidicola subsp. Schizaphis graminum (strain Sg) protein is Cytochrome bo(3) ubiquinol oxidase subunit 4 (cyoD).